The chain runs to 959 residues: Glutamate receptor 3.4 (959 aa).

Residues 1-35 (MGFLVMIREVSMAKAIRVVLLCVSVLWVVPKECAC) form the signal peptide. Over 36–613 (RSNFSRNSSS…SPWSFLKPFT (578 aa)) the chain is Extracellular. Residues Asn-38, Asn-42, Asn-108, Asn-365, Asn-378, Asn-404, Asn-443, Asn-461, and Asn-576 are each glycosylated (N-linked (GlcNAc...) asparagine). Residues 614-634 (IEMWAVTGGFFLFVGAMVWIL) traverse the membrane as a helical segment. Topologically, residues 635–643 (EHRFNQEFR) are cytoplasmic. Residues 644–664 (GPPRRQLITIFWFSFSTMFFS) traverse the membrane as a helical segment. At 665-675 (HRENTVSSLGR) the chain is on the cytoplasmic side. A helical transmembrane segment spans residues 676 to 696 (FVLIIWLFVVLIINSSYTASL). Over 697 to 857 (TSILTIRQLT…SEDSQLSLKS (161 aa)) the chain is Extracellular. A helical transmembrane segment spans residues 858-878 (FWGLFLICGITCFMALTVFFW). Topologically, residues 879 to 959 (RVFWQYQRLL…TSQSQHGEIT (81 aa)) are cytoplasmic. 2 disordered regions span residues 893–913 (DEER…SRAP) and 936–959 (KSSK…GEIT). Low complexity predominate over residues 943-959 (STQSAAGTSQSQHGEIT).

The protein belongs to the glutamate-gated ion channel (TC 1.A.10.1) family. In terms of assembly, forms a heteromeric channel with GLR3.2. In terms of tissue distribution, highly expressed in roots and at lower levels in leaves and siliques. Expressed in seedlings, cotyledons, roots (e.g. root hairs, epidermis and cortex cells), stems, leaves (e.g. vascular bundles and hydathodes), and siliques. Expressed in root phloem.

Its subcellular location is the cell membrane. The protein resides in the plastid. It localises to the chloroplast membrane. In terms of biological role, glutamate-gated receptor that probably acts as a non-selective cation channel, at least in hypocotyls. Can be triggered by Asn, Ser, Gly and, to a lower extent, Ala, Cys and Glu. May be involved in light-signal transduction and calcium homeostasis via the regulation of calcium influx into cells. Plays an important role in the calcium-based fast transmission of environmental stress. Acts as a negative regulator of lateral root initiation and development. May restrict primordia numbers and position along the root axis by a signaling process originating in the phloem. AtGLR3.4-mediated cytosolic calcium influx may be involved in the regulation of seed germination under salt stress by modulating sodium accumulation through the SOS pathway. The sequence is that of Glutamate receptor 3.4 from Arabidopsis thaliana (Mouse-ear cress).